A 68-amino-acid polypeptide reads, in one-letter code: MTLEMRMVELETRQAFQDDAIQALNDVVVEQARVIERLQLQMAELIKRHEEMVGQYGSEGEEAPPPHY.

This sequence belongs to the SlyX family.

The sequence is that of Protein SlyX homolog from Pseudomonas putida (strain ATCC 700007 / DSM 6899 / JCM 31910 / BCRC 17059 / LMG 24140 / F1).